The chain runs to 298 residues: Protease HtpX homolog (298 aa).

The next 2 helical transmembrane spans lie at 14 to 34 (VVLLVVFFALLALIGASAGYL) and 39 to 59 (YAMGLVLALVIGVIYATSMIF). H143 lines the Zn(2+) pocket. E144 is an active-site residue. Residue H147 coordinates Zn(2+). 2 consecutive transmembrane segments (helical) span residues 158 to 178 (IAVALASAVTVISSIGGRMLW) and 197 to 217 (IITLLLSLLSLLLAPLVASLI). E226 is a binding site for Zn(2+).

It belongs to the peptidase M48B family. Requires Zn(2+) as cofactor.

The protein localises to the cell membrane. This is Protease HtpX homolog from Streptococcus pyogenes serotype M1.